A 222-amino-acid chain; its full sequence is Uclacyanin-3 (222 aa).

The N-terminal stretch at 1 to 21 (MGSTVAAALLLFLAAVPAVFA) is a signal peptide. In terms of domain architecture, Phytocyanin spans 22-120 (ATFKVGDISG…GMKLAVPVLA (99 aa)). Residues His61, Cys102, His107, and Met112 each contribute to the Cu cation site. Cys74 and Cys108 are disulfide-bonded. The tract at residues 121-198 (AAPSPSTPSS…APLPPSLSPN (78 aa)) is disordered. Pro residues-rich tracts occupy residues 125–172 (PSTP…PSAS) and 185–195 (TPPPAPLPPSL). A lipid anchor (GPI-anchor amidated asparagine) is attached at Asn198. A propeptide spans 199–222 (AASKGVMSYGIIGVTMILMYAVMT) (removed in mature form).

It localises to the cell membrane. Probably acts as an electron carrier involved in oxygen activation and/or lignin formation. The chain is Uclacyanin-3 (UCC3) from Arabidopsis thaliana (Mouse-ear cress).